A 65-amino-acid chain; its full sequence is UPF0434 protein CC_0108 (65 aa).

Belongs to the UPF0434 family.

This Caulobacter vibrioides (strain ATCC 19089 / CIP 103742 / CB 15) (Caulobacter crescentus) protein is UPF0434 protein CC_0108.